A 303-amino-acid chain; its full sequence is L(+)-tartrate dehydratase subunit alpha (303 aa).

Iron-sulfur cluster is bound by residues C71, C190, and C277.

The protein belongs to the class-I fumarase family. As to quaternary structure, tetramer of two alpha and two beta subunits. Iron-sulfur cluster is required as a cofactor.

The enzyme catalyses (2R,3R)-tartrate = oxaloacetate + H2O. The chain is L(+)-tartrate dehydratase subunit alpha (ttdA) from Escherichia coli O6:H1 (strain CFT073 / ATCC 700928 / UPEC).